The following is a 780-amino-acid chain: Lon protease (780 aa).

The Lon N-terminal domain maps to 11 to 204 (IPVLPLRDVV…RLMAIMESEI (194 aa)). Residue 356 to 363 (GPPGVGKT) coordinates ATP. The Lon proteolytic domain occupies 592 to 773 (KNQIGQVIGL…KEVLNLSLEN (182 aa)). Catalysis depends on residues Ser-679 and Lys-722.

It belongs to the peptidase S16 family. As to quaternary structure, homohexamer. Organized in a ring with a central cavity.

It localises to the cytoplasm. The enzyme catalyses Hydrolysis of proteins in presence of ATP.. ATP-dependent serine protease that mediates the selective degradation of mutant and abnormal proteins as well as certain short-lived regulatory proteins. Required for cellular homeostasis and for survival from DNA damage and developmental changes induced by stress. Degrades polypeptides processively to yield small peptide fragments that are 5 to 10 amino acids long. Binds to DNA in a double-stranded, site-specific manner. In Buchnera aphidicola subsp. Baizongia pistaciae (strain Bp), this protein is Lon protease.